The following is a 165-amino-acid chain: Nucleotide-binding protein CHY_1197 (165 aa).

Belongs to the YajQ family.

Functionally, nucleotide-binding protein. The polypeptide is Nucleotide-binding protein CHY_1197 (Carboxydothermus hydrogenoformans (strain ATCC BAA-161 / DSM 6008 / Z-2901)).